Reading from the N-terminus, the 435-residue chain is Ribulose bisphosphate carboxylase large chain (435 aa).

The residue at position 5 (Lys-5) is an N6,N6,N6-trimethyllysine. Asn-114 and Thr-164 together coordinate substrate. The Proton acceptor role is filled by Lys-166. Lys-168 is a binding site for substrate. 3 residues coordinate Mg(2+): Lys-192, Asp-194, and Glu-195. Residue Lys-192 is modified to N6-carboxylysine. His-285 (proton acceptor) is an active-site residue. The substrate site is built by Arg-286, His-318, and Ser-370.

Belongs to the RuBisCO large chain family. Type I subfamily. As to quaternary structure, heterohexadecamer of 8 large chains and 8 small chains; disulfide-linked. The disulfide link is formed within the large subunit homodimers. Mg(2+) serves as cofactor. The disulfide bond which can form in the large chain dimeric partners within the hexadecamer appears to be associated with oxidative stress and protein turnover.

The protein resides in the plastid. It is found in the chloroplast. The enzyme catalyses 2 (2R)-3-phosphoglycerate + 2 H(+) = D-ribulose 1,5-bisphosphate + CO2 + H2O. It catalyses the reaction D-ribulose 1,5-bisphosphate + O2 = 2-phosphoglycolate + (2R)-3-phosphoglycerate + 2 H(+). In terms of biological role, ruBisCO catalyzes two reactions: the carboxylation of D-ribulose 1,5-bisphosphate, the primary event in carbon dioxide fixation, as well as the oxidative fragmentation of the pentose substrate in the photorespiration process. Both reactions occur simultaneously and in competition at the same active site. This is Ribulose bisphosphate carboxylase large chain from Drosera burmannii (Burmese sundew).